A 225-amino-acid chain; its full sequence is Transmembrane protein C16orf54 homolog (225 aa).

The helical transmembrane segment at 34–54 threads the bilayer; the sequence is IPIMLGLASLTAFFIITTAVL. Positions 107–149 are disordered; that stretch reads RAPDPPTPGGTLEGRATAPPAIPTPHPSPSSLVPQTPPEVPAQ. A phosphothreonine mark is found at threonine 113 and threonine 117. Serine 195 bears the Phosphoserine mark.

Its subcellular location is the membrane. This chain is Transmembrane protein C16orf54 homolog, found in Rattus norvegicus (Rat).